We begin with the raw amino-acid sequence, 229 residues long: Prolactin (229 aa).

Residues 1–30 (MDSKVSSQKGSRLLLLLVVSNLLLCQGVVS) form the signal peptide. A disulfide bridge links Cys-34 with Cys-41. Phosphoserine is present on residues Ser-56, Ser-64, and Ser-120. 2 disulfide bridges follow: Cys-88/Cys-204 and Cys-221/Cys-229.

Belongs to the somatotropin/prolactin family. Interacts with PRLR.

The protein localises to the secreted. In terms of biological role, prolactin acts primarily on the mammary gland by promoting lactation. The protein is Prolactin (PRL) of Cervus elaphus (Red deer).